Reading from the N-terminus, the 263-residue chain is Pro-opiomelanocortin (263 aa).

The N-terminal stretch at 1 to 25 (MLHPVWGCVVAVMGVLWFYSSGVQS) is a signal peptide. Glutamine 26 carries the post-translational modification Pyrrolidone carboxylic acid. 2 disulfide bridges follow: cysteine 27–cysteine 49 and cysteine 33–cysteine 45. The disordered stretch occupies residues 114–142 (SQPRDEVERESEEEEGLQQHRRDDKRSYS). Residues 130–142 (LQQHRRDDKRSYS) show a composition bias toward basic and acidic residues. Valine 152 carries the post-translational modification Valine amide.

Belongs to the POMC family. Post-translationally, specific enzymatic cleavages at paired basic residues yield the different active peptides.

It is found in the secreted. In terms of biological role, stimulates the adrenal glands to release cortisol. Functionally, anorexigenic peptide. Increases the pigmentation of skin by increasing melanin production in melanocytes. Increases the pigmentation of skin by increasing melanin production in melanocytes. Its function is as follows. Endogenous orexigenic opiate. In terms of biological role, endogenous opiate. The chain is Pro-opiomelanocortin (pomc) from Acipenser transmontanus (White sturgeon).